The sequence spans 821 residues: LPS-assembly protein LptD (821 aa).

Residues 1–20 form the signal peptide; it reads MGKRLFWTALSGLMVSAAHA.

This sequence belongs to the LptD family. In terms of assembly, component of the lipopolysaccharide transport and assembly complex. Interacts with LptE and LptA.

The protein localises to the cell outer membrane. Functionally, together with LptE, is involved in the assembly of lipopolysaccharide (LPS) at the surface of the outer membrane. This is LPS-assembly protein LptD from Chromohalobacter salexigens (strain ATCC BAA-138 / DSM 3043 / CIP 106854 / NCIMB 13768 / 1H11).